A 405-amino-acid polypeptide reads, in one-letter code: Phosphoglycerate kinase (405 aa).

Substrate contacts are provided by residues 24-26 (DFN), Arg-40, 63-66 (HLGR), Arg-122, and Arg-162. Residues Lys-212, Glu-331, and 361–364 (GGDS) each bind ATP.

Belongs to the phosphoglycerate kinase family. Monomer.

It localises to the cytoplasm. It catalyses the reaction (2R)-3-phosphoglycerate + ATP = (2R)-3-phospho-glyceroyl phosphate + ADP. It participates in carbohydrate degradation; glycolysis; pyruvate from D-glyceraldehyde 3-phosphate: step 2/5. This Corynebacterium efficiens (strain DSM 44549 / YS-314 / AJ 12310 / JCM 11189 / NBRC 100395) protein is Phosphoglycerate kinase.